The chain runs to 561 residues: Urocanate hydratase (561 aa).

Residues 52 to 53 (GG), Gln-130, 176 to 178 (GMG), Glu-196, Arg-201, 242 to 243 (NA), 263 to 267 (QTSAH), 273 to 274 (YL), and Tyr-322 each bind NAD(+). The active site involves Cys-410. Gly-492 lines the NAD(+) pocket.

Belongs to the urocanase family. Requires NAD(+) as cofactor.

It localises to the cytoplasm. It carries out the reaction 4-imidazolone-5-propanoate = trans-urocanate + H2O. Its pathway is amino-acid degradation; L-histidine degradation into L-glutamate; N-formimidoyl-L-glutamate from L-histidine: step 2/3. Functionally, catalyzes the conversion of urocanate to 4-imidazolone-5-propionate. The protein is Urocanate hydratase of Salmonella choleraesuis (strain SC-B67).